The following is a 103-amino-acid chain: UPF0145 protein BCE33L0904 (103 aa).

This sequence belongs to the UPF0145 family.

The protein is UPF0145 protein BCE33L0904 of Bacillus cereus (strain ZK / E33L).